The following is a 251-amino-acid chain: uncharacterized protein (251 aa).

N-linked (GlcNAc...) asparagine; by host glycosylation is found at N149, N152, and N207. Residues Y226–Y246 form a helical membrane-spanning segment.

The protein belongs to the glycosyltransferase 32 family.

It is found in the membrane. This is an uncharacterized protein from Acanthamoeba polyphaga (Amoeba).